The sequence spans 323 residues: Methionyl-tRNA formyltransferase (323 aa).

(6S)-5,6,7,8-tetrahydrofolate is bound at residue 113–116 (SLLP).

Belongs to the Fmt family.

It catalyses the reaction L-methionyl-tRNA(fMet) + (6R)-10-formyltetrahydrofolate = N-formyl-L-methionyl-tRNA(fMet) + (6S)-5,6,7,8-tetrahydrofolate + H(+). Its function is as follows. Attaches a formyl group to the free amino group of methionyl-tRNA(fMet). The formyl group appears to play a dual role in the initiator identity of N-formylmethionyl-tRNA by promoting its recognition by IF2 and preventing the misappropriation of this tRNA by the elongation apparatus. This is Methionyl-tRNA formyltransferase from Porphyromonas gingivalis (strain ATCC 33277 / DSM 20709 / CIP 103683 / JCM 12257 / NCTC 11834 / 2561).